Here is a 449-residue protein sequence, read N- to C-terminus: Tubulin beta-5 chain (449 aa).

Residues Q11, E70, S139, G143, T144, G145, N205, and N227 each coordinate GTP. E70 lines the Mg(2+) pocket. Residues Q427–T449 form a disordered region. Acidic residues predominate over residues T430–T449.

It belongs to the tubulin family. In terms of assembly, dimer of alpha and beta chains. A typical microtubule is a hollow water-filled tube with an outer diameter of 25 nm and an inner diameter of 15 nM. Alpha-beta heterodimers associate head-to-tail to form protofilaments running lengthwise along the microtubule wall with the beta-tubulin subunit facing the microtubule plus end conferring a structural polarity. Microtubules usually have 13 protofilaments but different protofilament numbers can be found in some organisms and specialized cells. Mg(2+) serves as cofactor.

The protein resides in the cytoplasm. It localises to the cytoskeleton. Tubulin is the major constituent of microtubules, a cylinder consisting of laterally associated linear protofilaments composed of alpha- and beta-tubulin heterodimers. Microtubules grow by the addition of GTP-tubulin dimers to the microtubule end, where a stabilizing cap forms. Below the cap, tubulin dimers are in GDP-bound state, owing to GTPase activity of alpha-tubulin. The chain is Tubulin beta-5 chain (TUBB5) from Arabidopsis thaliana (Mouse-ear cress).